We begin with the raw amino-acid sequence, 144 residues long: MRKLGIDLGKIRTGFAISDDSNKISLPLKTFIQKNANFNNIILEIKKILLEYQIDTIVIGLPIKINNEKTKSTIFVENFKKHLEKEINLPIFFVNEYNSSVLANLSINEMKSKKRKTIVDKISAQIILNDFLNNYFIKEKYDEN.

This sequence belongs to the YqgF nuclease family.

Its subcellular location is the cytoplasm. Functionally, could be a nuclease involved in processing of the 5'-end of pre-16S rRNA. This is Putative pre-16S rRNA nuclease from Mycoplasma mobile (strain ATCC 43663 / 163K / NCTC 11711) (Mesomycoplasma mobile).